The primary structure comprises 178 residues: uncharacterized protein (178 aa).

This is an uncharacterized protein from Acanthamoeba polyphaga mimivirus (APMV).